The following is a 416-amino-acid chain: Gamma-glutamyl phosphate reductase (416 aa).

It belongs to the gamma-glutamyl phosphate reductase family.

The protein localises to the cytoplasm. It carries out the reaction L-glutamate 5-semialdehyde + phosphate + NADP(+) = L-glutamyl 5-phosphate + NADPH + H(+). The protein operates within amino-acid biosynthesis; L-proline biosynthesis; L-glutamate 5-semialdehyde from L-glutamate: step 2/2. Functionally, catalyzes the NADPH-dependent reduction of L-glutamate 5-phosphate into L-glutamate 5-semialdehyde and phosphate. The product spontaneously undergoes cyclization to form 1-pyrroline-5-carboxylate. The protein is Gamma-glutamyl phosphate reductase of Streptococcus thermophilus.